Here is a 166-residue protein sequence, read N- to C-terminus: Peptide deformylase (166 aa).

Cysteine 88 and histidine 130 together coordinate Fe cation. Residue glutamate 131 is part of the active site. Histidine 134 contributes to the Fe cation binding site.

It belongs to the polypeptide deformylase family. Fe(2+) serves as cofactor.

The enzyme catalyses N-terminal N-formyl-L-methionyl-[peptide] + H2O = N-terminal L-methionyl-[peptide] + formate. Removes the formyl group from the N-terminal Met of newly synthesized proteins. Requires at least a dipeptide for an efficient rate of reaction. N-terminal L-methionine is a prerequisite for activity but the enzyme has broad specificity at other positions. This is Peptide deformylase from Thermoanaerobacter sp. (strain X514).